The chain runs to 166 residues: Interferon gamma (166 aa).

Residues 1–23 form the signal peptide; sequence MKYTSYFLALLLCVLLGFSGSYG. Pyrrolidone carboxylic acid is present on Gln24. Asn39 and Asn106 each carry an N-linked (GlcNAc...) asparagine glycan.

It belongs to the type II (or gamma) interferon family. In terms of assembly, homodimer. Interacts with IFNGR1 (via extracellular domain); this interaction promotes IFNGR1 dimerization. As to expression, released primarily from activated T lymphocytes.

Its subcellular location is the secreted. Its function is as follows. Type II interferon produced by immune cells such as T-cells and NK cells that plays crucial roles in antimicrobial, antiviral, and antitumor responses by activating effector immune cells and enhancing antigen presentation. Primarily signals through the JAK-STAT pathway after interaction with its receptor IFNGR1 to affect gene regulation. Upon IFNG binding, IFNGR1 intracellular domain opens out to allow association of downstream signaling components JAK2, JAK1 and STAT1, leading to STAT1 activation, nuclear translocation and transcription of IFNG-regulated genes. Many of the induced genes are transcription factors such as IRF1 that are able to further drive regulation of a next wave of transcription. Plays a role in class I antigen presentation pathway by inducing a replacement of catalytic proteasome subunits with immunoproteasome subunits. In turn, increases the quantity, quality, and repertoire of peptides for class I MHC loading. Increases the efficiency of peptide generation also by inducing the expression of activator PA28 that associates with the proteasome and alters its proteolytic cleavage preference. Up-regulates as well MHC II complexes on the cell surface by promoting expression of several key molecules such as cathepsins B/CTSB, H/CTSH, and L/CTSL. Participates in the regulation of hematopoietic stem cells during development and under homeostatic conditions by affecting their development, quiescence, and differentiation. This chain is Interferon gamma (IFNG), found in Bos indicus (Zebu).